The chain runs to 370 residues: 3-isopropylmalate dehydrogenase (370 aa).

77–90 (GPKWDSVPYEVRPE) contributes to the NAD(+) binding site. The substrate site is built by Arg-97, Arg-107, Arg-135, and Asp-226. Residues Asp-226, Asp-250, and Asp-254 each contribute to the Mg(2+) site. 290 to 302 (GSAPDIAGKGIAN) lines the NAD(+) pocket.

It belongs to the isocitrate and isopropylmalate dehydrogenases family. LeuB type 1 subfamily. Homodimer. Requires Mg(2+) as cofactor. Mn(2+) is required as a cofactor.

Its subcellular location is the cytoplasm. The enzyme catalyses (2R,3S)-3-isopropylmalate + NAD(+) = 4-methyl-2-oxopentanoate + CO2 + NADH. The protein operates within amino-acid biosynthesis; L-leucine biosynthesis; L-leucine from 3-methyl-2-oxobutanoate: step 3/4. Catalyzes the oxidation of 3-carboxy-2-hydroxy-4-methylpentanoate (3-isopropylmalate) to 3-carboxy-4-methyl-2-oxopentanoate. The product decarboxylates to 4-methyl-2 oxopentanoate. This chain is 3-isopropylmalate dehydrogenase, found in Rhizobium etli (strain ATCC 51251 / DSM 11541 / JCM 21823 / NBRC 15573 / CFN 42).